A 110-amino-acid chain; its full sequence is Large ribosomal subunit protein uL22 (110 aa).

The protein belongs to the universal ribosomal protein uL22 family. Part of the 50S ribosomal subunit.

In terms of biological role, this protein binds specifically to 23S rRNA; its binding is stimulated by other ribosomal proteins, e.g. L4, L17, and L20. It is important during the early stages of 50S assembly. It makes multiple contacts with different domains of the 23S rRNA in the assembled 50S subunit and ribosome. Functionally, the globular domain of the protein is located near the polypeptide exit tunnel on the outside of the subunit, while an extended beta-hairpin is found that lines the wall of the exit tunnel in the center of the 70S ribosome. The polypeptide is Large ribosomal subunit protein uL22 (Nitrosococcus oceani (strain ATCC 19707 / BCRC 17464 / JCM 30415 / NCIMB 11848 / C-107)).